Here is a 283-residue protein sequence, read N- to C-terminus: MSQGYLNFPHIDPILFQIGPLAIRWYGLMYLFGFMFALWLANKRADKPNSGWTKDQVSDLLFAGFLGVVIGGRIGYVLFYNFGYFLDNPLYLFEVWTGGMSFHGGLLGVISAMLWYGYKNNRSFFTIADFVAPLVPFGLGAGRLGNFMNGELWGRVTDVPWAMVFPSGGPFPRHPSQLYEFALEGIVLFLILNWFIRKPRPLGAVSGLFLFGYGTFRFLVEYVREPDAQLGLFGDWISMGQILSLPMVIGGLLMMVWAFKRNLYATDLKNSGDKQNSSKQKAK.

7 consecutive transmembrane segments (helical) span residues 21 to 41 (LAIR…LWLA), 60 to 80 (LLFA…VLFY), 95 to 115 (VWTG…AMLW), 124 to 144 (FFTI…AGRL), 176 to 196 (SQLY…NWFI), 203 to 223 (GAVS…VEYV), and 239 to 259 (MGQI…VWAF). Position 143 (R143) interacts with a 1,2-diacyl-sn-glycero-3-phospho-(1'-sn-glycerol).

Belongs to the Lgt family.

Its subcellular location is the cell inner membrane. It catalyses the reaction L-cysteinyl-[prolipoprotein] + a 1,2-diacyl-sn-glycero-3-phospho-(1'-sn-glycerol) = an S-1,2-diacyl-sn-glyceryl-L-cysteinyl-[prolipoprotein] + sn-glycerol 1-phosphate + H(+). It participates in protein modification; lipoprotein biosynthesis (diacylglyceryl transfer). In terms of biological role, catalyzes the transfer of the diacylglyceryl group from phosphatidylglycerol to the sulfhydryl group of the N-terminal cysteine of a prolipoprotein, the first step in the formation of mature lipoproteins. In Aliivibrio salmonicida (strain LFI1238) (Vibrio salmonicida (strain LFI1238)), this protein is Phosphatidylglycerol--prolipoprotein diacylglyceryl transferase.